Here is a 301-residue protein sequence, read N- to C-terminus: Rhodopsin (301 aa).

Residues 1 to 18 (LHMIHLHWYQYPPMNPMM) lie on the Extracellular side of the membrane. The chain crosses the membrane as a helical span at residues 19-43 (YPLLLVFMLITGILCLAGNFVTIWV). Topologically, residues 44 to 55 (FMNTKSLRTPAN) are cytoplasmic. Residues 56–78 (LLVVNLAMSDFLMMFTMFPPMMI) form a helical membrane-spanning segment. Residues 79-92 (TCYYHTWTLGATFC) lie on the Extracellular side of the membrane. Residues C92 and C169 are joined by a disulfide bond. A helical transmembrane segment spans residues 93-115 (EVYAFLGNLCGCASIWTMVFITF). The 'Ionic lock' involved in activated form stabilization motif lies at 116 to 118 (DRY). Over 116-134 (DRYNVIVKGVAGEPLSTKK) the chain is Cytoplasmic. The chain crosses the membrane as a helical span at residues 135–155 (ASLWILTVWVLSFTWCVAPFF). Over 156 to 182 (GWNRYVPEGNLTGCGTDYLSEDILSRS) the chain is Extracellular. A glycan (N-linked (GlcNAc...) asparagine) is linked at N165. A helical membrane pass occupies residues 183–204 (YLYIYSTWVYFLPLAITIYCYV). The Cytoplasmic segment spans residues 205–245 (FIIKAVAAHEKGMRDQAKKMGIKSLRNEEAQKTSAECRLAK). The chain crosses the membrane as a helical span at residues 246-267 (IAMTTVALWFIAWTPYLLINWV). Residues 268 to 278 (GMFARSYLSPV) are Extracellular-facing. Residues 279–300 (YTIWGYVFAKANAVYNPIVYAI) traverse the membrane as a helical segment. K288 is modified (N6-(retinylidene)lysine).

This sequence belongs to the G-protein coupled receptor 1 family. Opsin subfamily. In terms of assembly, homodimer. Interacts with GNAQ. In terms of processing, contains one covalently linked retinal chromophore.

It is found in the cell projection. The protein resides in the rhabdomere membrane. Photoreceptor required for image-forming vision at low light intensity. Can use both retinal and 3-dehydroretinal as visual pigment. Light-induced isomerization of 11-cis to all-trans retinal triggers a conformational change that activates signaling via G-proteins. Signaling via GNAQ probably mediates the activation of phospholipase C. In Lacunicambarus ludovicianus (Painted devil crayfish), this protein is Rhodopsin (RHO).